An 894-amino-acid polypeptide reads, in one-letter code: Microsomal triglyceride transfer protein large subunit (894 aa).

An N-terminal signal peptide occupies residues 1–21 (MILLAVLFLCFFSSYSASVKG). In terms of domain architecture, Vitellogenin spans 28-658 (LNNERLYKLT…IFQYIGKAEL (631 aa)). Cysteine 174 and cysteine 194 form a disulfide bridge.

As to quaternary structure, interacts with PRAP1. In terms of assembly, heterodimer; heterodimerizes with the protein disulfide isomerase (P4HB/PDI). Interacts with APOB. Heterodimer; heterodimerizes with the protein disulfide isomerase (P4HB/PDI). Post-translationally, cleaved by signal peptidase between residues Gln-33 and Asn-34. As to expression, mainly expressed in the intestine and the liver, and at lower levels in white and brown fat cells. Expressed in heart. Ubiquitous, and is the major isoform in hematopoietic cells and adipocytes.

It localises to the endoplasmic reticulum. The protein localises to the golgi apparatus. The catalysed reaction is a 1,2-diacyl-sn-glycero-3-phosphocholine(in) = a 1,2-diacyl-sn-glycero-3-phosphocholine(out). The enzyme catalyses a 1,2-diacyl-sn-glycero-3-phosphoethanolamine(in) = a 1,2-diacyl-sn-glycero-3-phosphoethanolamine(out). It carries out the reaction a cholesterol ester(in) = a cholesterol ester(out). It catalyses the reaction a triacyl-sn-glycerol(in) = a triacyl-sn-glycerol(out). In terms of biological role, catalyzes the transport of triglyceride, cholesteryl ester, and phospholipid between phospholipid surfaces. Required for the assembly and secretion of plasma lipoproteins that contain apolipoprotein B. May be involved in regulating cholesteryl ester biosynthesis in cells that produce lipoproteins. Functionally, critical for the development of natural killer T (NKT) cells. Required for the assembly and secretion of plasma lipoproteins that contain apolipoprotein B. This chain is Microsomal triglyceride transfer protein large subunit (Mttp), found in Mus musculus (Mouse).